Consider the following 567-residue polypeptide: Galectin-3-binding protein A (567 aa).

The signal sequence occupies residues 1–16 (MIMYIIWALLFIPVSA). The 100-residue stretch at 34-133 (VRLVGGLPSS…HQEDAGVVCD (100 aa)) folds into the SRCR domain. 3 disulfides stabilise this stretch: C58-C122, C71-C132, and C102-C112. N137, N197, N200, and N204 each carry an N-linked (GlcNAc...) asparagine glycan. In terms of domain architecture, BACK spans 272–374 (PVSMYEYGLR…IPVDKLYDIQ (103 aa)). Residues N412, N432, and N543 are each glycosylated (N-linked (GlcNAc...) asparagine).

The protein resides in the secreted. It is found in the extracellular space. Its subcellular location is the extracellular matrix. In terms of biological role, promotes integrin-mediated cell adhesion. The sequence is that of Galectin-3-binding protein A (lgals3bpa) from Danio rerio (Zebrafish).